Here is a 364-residue protein sequence, read N- to C-terminus: UDP-N-acetylglucosamine--N-acetylmuramyl-(pentapeptide) pyrophosphoryl-undecaprenol N-acetylglucosamine transferase (364 aa).

UDP-N-acetyl-alpha-D-glucosamine-binding positions include 10–12, Asn124, Arg166, Ser196, and Gln297; that span reads TGG.

It belongs to the glycosyltransferase 28 family. MurG subfamily.

It is found in the cell membrane. It catalyses the reaction di-trans,octa-cis-undecaprenyl diphospho-N-acetyl-alpha-D-muramoyl-L-alanyl-D-glutamyl-meso-2,6-diaminopimeloyl-D-alanyl-D-alanine + UDP-N-acetyl-alpha-D-glucosamine = di-trans,octa-cis-undecaprenyl diphospho-[N-acetyl-alpha-D-glucosaminyl-(1-&gt;4)]-N-acetyl-alpha-D-muramoyl-L-alanyl-D-glutamyl-meso-2,6-diaminopimeloyl-D-alanyl-D-alanine + UDP + H(+). The protein operates within cell wall biogenesis; peptidoglycan biosynthesis. Cell wall formation. Catalyzes the transfer of a GlcNAc subunit on undecaprenyl-pyrophosphoryl-MurNAc-pentapeptide (lipid intermediate I) to form undecaprenyl-pyrophosphoryl-MurNAc-(pentapeptide)GlcNAc (lipid intermediate II). This is UDP-N-acetylglucosamine--N-acetylmuramyl-(pentapeptide) pyrophosphoryl-undecaprenol N-acetylglucosamine transferase from Thermoanaerobacter pseudethanolicus (strain ATCC 33223 / 39E) (Clostridium thermohydrosulfuricum).